We begin with the raw amino-acid sequence, 397 residues long: Tryptophan synthase beta chain (397 aa).

Residue Lys-88 is modified to N6-(pyridoxal phosphate)lysine.

It belongs to the TrpB family. As to quaternary structure, tetramer of two alpha and two beta chains. Requires pyridoxal 5'-phosphate as cofactor.

The catalysed reaction is (1S,2R)-1-C-(indol-3-yl)glycerol 3-phosphate + L-serine = D-glyceraldehyde 3-phosphate + L-tryptophan + H2O. It functions in the pathway amino-acid biosynthesis; L-tryptophan biosynthesis; L-tryptophan from chorismate: step 5/5. Its function is as follows. The beta subunit is responsible for the synthesis of L-tryptophan from indole and L-serine. In Shewanella amazonensis (strain ATCC BAA-1098 / SB2B), this protein is Tryptophan synthase beta chain.